Consider the following 204-residue polypeptide: Probable GTP-binding protein EngB (204 aa).

The region spanning 27 to 201 (SGIEIAFAGR…SEKLDQWFSP (175 aa)) is the EngB-type G domain. GTP contacts are provided by residues 35 to 42 (GRSNAGKS), 62 to 66 (GRTQL), 80 to 83 (DLPG), 147 to 150 (TKAD), and 180 to 182 (FSA). Mg(2+) contacts are provided by S42 and T64.

This sequence belongs to the TRAFAC class TrmE-Era-EngA-EngB-Septin-like GTPase superfamily. EngB GTPase family. The cofactor is Mg(2+).

Functionally, necessary for normal cell division and for the maintenance of normal septation. This Histophilus somni (strain 129Pt) (Haemophilus somnus) protein is Probable GTP-binding protein EngB.